We begin with the raw amino-acid sequence, 449 residues long: N-succinylarginine dihydrolase (449 aa).

Residues 19-28 (GGLSYGNVAS), N110, and 137-138 (HR) contribute to the substrate site. Positions 23 to 43 (YGNVASQSNSQQASNPREAAR) are disordered. Over residues 27–37 (ASQSNSQQASN) the composition is skewed to low complexity. The active site involves E174. R214 provides a ligand contact to substrate. H250 is an active-site residue. The substrate site is built by D252 and N365. The active-site Nucleophile is C371.

This sequence belongs to the succinylarginine dihydrolase family. As to quaternary structure, homodimer.

It catalyses the reaction N(2)-succinyl-L-arginine + 2 H2O + 2 H(+) = N(2)-succinyl-L-ornithine + 2 NH4(+) + CO2. It participates in amino-acid degradation; L-arginine degradation via AST pathway; L-glutamate and succinate from L-arginine: step 2/5. In terms of biological role, catalyzes the hydrolysis of N(2)-succinylarginine into N(2)-succinylornithine, ammonia and CO(2). The sequence is that of N-succinylarginine dihydrolase from Pseudomonas putida (strain ATCC 47054 / DSM 6125 / CFBP 8728 / NCIMB 11950 / KT2440).